We begin with the raw amino-acid sequence, 70 residues long: Small ribosomal subunit protein bS21 (70 aa).

Belongs to the bacterial ribosomal protein bS21 family.

The sequence is that of Small ribosomal subunit protein bS21 from Nitrosomonas eutropha (strain DSM 101675 / C91 / Nm57).